We begin with the raw amino-acid sequence, 129 residues long: Small ribosomal subunit protein uS11 (129 aa).

The protein belongs to the universal ribosomal protein uS11 family. In terms of assembly, part of the 30S ribosomal subunit. Interacts with proteins S7 and S18. Binds to IF-3.

In terms of biological role, located on the platform of the 30S subunit, it bridges several disparate RNA helices of the 16S rRNA. Forms part of the Shine-Dalgarno cleft in the 70S ribosome. This chain is Small ribosomal subunit protein uS11, found in Sinorhizobium medicae (strain WSM419) (Ensifer medicae).